The sequence spans 220 residues: UPF0319 protein Asuc_1002 (220 aa).

Positions 1–21 are cleaved as a signal peptide; sequence MKFRLAAVAAAALLASSASFA.

It belongs to the UPF0319 family.

The chain is UPF0319 protein Asuc_1002 from Actinobacillus succinogenes (strain ATCC 55618 / DSM 22257 / CCUG 43843 / 130Z).